Here is a 259-residue protein sequence, read N- to C-terminus: Ferritin-3, chloroplastic (259 aa).

Residues 1–49 (MLLKAASTFSLLNIHGEKKDISPLFSSSSSISSPVSSGKSGNLSFPLRA) constitute a chloroplast transit peptide. The extension peptide (EP) stretch occupies residues 50-88 (SKSSTTTTSTLSGVVFEPFEEVKKEMDLVPSGQQLSLAR). The 154-residue stretch at 89-242 (HLYSPECEAA…EYVSQLRRLG (154 aa)) folds into the Ferritin-like diiron domain. Fe cation contacts are provided by glutamate 106, glutamate 141, histidine 144, glutamate 190, and glutamine 224.

The protein belongs to the ferritin family. Oligomer of 24 subunits. There are two types of subunits: L (light) chain and H (heavy) chain. The major chain can be light or heavy, depending on the species and tissue type. The functional molecule forms a roughly spherical shell with a diameter of 12 nm and contains a central cavity into which the insoluble mineral iron core is deposited.

It is found in the plastid. The protein localises to the chloroplast. The catalysed reaction is 4 Fe(2+) + O2 + 4 H(+) = 4 Fe(3+) + 2 H2O. Functionally, stores iron in a soluble, non-toxic, readily available form. Important for iron homeostasis. Has ferroxidase activity. Iron is taken up in the ferrous form and deposited as ferric hydroxides after oxidation. The sequence is that of Ferritin-3, chloroplastic (FER3) from Arabidopsis thaliana (Mouse-ear cress).